The following is a 158-amino-acid chain: SKP1-like protein 18 (158 aa).

The segment at 99 to 157 (ILAANYLNFEGLLGFASQTVADYIKDKTPEEVREIFNIENDFTPEEEEEIRKENAWTFN) is interaction with the F-box domain of F-box proteins.

It belongs to the SKP1 family. In terms of assembly, part of a SCF (SKP1-cullin-F-box) protein ligase complex. Interacts with CPR1/CPR30, EBF1, SKP2A, At3g61590, At4g38940 and At5g49610. As to expression, expressed in young seedlings, roots, leaves, floral stems, inflorescences, pollen, and siliques.

The protein resides in the nucleus. Its pathway is protein modification; protein ubiquitination. Its function is as follows. Involved in ubiquitination and subsequent proteasomal degradation of target proteins. Together with CUL1, RBX1 and a F-box protein, it forms a SCF E3 ubiquitin ligase complex. The functional specificity of this complex depends on the type of F-box protein. In the SCF complex, it serves as an adapter that links the F-box protein to CUL1. The sequence is that of SKP1-like protein 18 (ASK18) from Arabidopsis thaliana (Mouse-ear cress).